The primary structure comprises 1073 residues: Probable lipase MIL1 (1073 aa).

Disordered regions lie at residues 1 to 151 and 163 to 190; these read MSDS…AVSS and LTSK…KSVN. Composition is skewed to basic and acidic residues over residues 54-81 and 101-121; these read QAKE…EAGK and GIDR…HDTD. The short motif at 143 to 147 is the APM2-interacting WQEMP motif element; the sequence is WQEMP. Residues Asn190, Asn229, and Asn236 are each glycosylated (N-linked (GlcNAc...) asparagine). The interval 230–267 is disordered; the sequence is SSQTSVNLTSSPSTTSLNNEKNNDDDDDDSYDEYEDDV. Low complexity predominate over residues 233 to 249; the sequence is TSVNLTSSPSTTSLNNE. Residues 252-267 show a composition bias toward acidic residues; the sequence is NDDDDDDSYDEYEDDV. A glycan (N-linked (GlcNAc...) asparagine) is linked at Asn280. The chain crosses the membrane as a helical span at residues 292-312; sequence FAYVGAINILANQMCTNLATL. Positions 385-448 are disordered; sequence NPWENDRDHE…SDVPGKVLDP (64 aa). Positions 404–427 are enriched in polar residues; the sequence is RMSPNEQNGSVQASTPDPEQSATP. Residue Asn411 is glycosylated (N-linked (GlcNAc...) asparagine). A Phosphoserine modification is found at Ser435. A helical transmembrane segment spans residues 457–477; it reads LNIDVAWTIICDLFLICLQSS. N-linked (GlcNAc...) asparagine glycosylation is present at Asn495. The next 2 membrane-spanning stretches (helical) occupy residues 553 to 573 and 577 to 597; these read LVLG…IAAG and IGIT…VVAV. Asn726 is a glycosylation site (N-linked (GlcNAc...) asparagine). A helical transmembrane segment spans residues 818 to 838; it reads WFLAYLFRAAAGGFSAVMGIS. A glycan (N-linked (GlcNAc...) asparagine) is linked at Asn850. Disordered regions lie at residues 942-968 and 1010-1073; these read GRDM…EGIA and KEVE…PDDI. Over residues 1027–1037 the composition is skewed to pro residues; that stretch reads PSTPKINPPQS. Position 1037 is a phosphoserine (Ser1037).

The protein belongs to the TMCO4 family. In terms of assembly, interacts with RPP0. Interacts with APM2.

Its subcellular location is the golgi apparatus membrane. It is found in the early endosome membrane. The protein resides in the cytoplasmic vesicle. The protein localises to the clathrin-coated vesicle membrane. Functionally, probable lipase that recruits the AP-1-related (AP-1R) complex to membranes via interaction with APM2. The AP-1R complex is an adapter protein complex that mediates of cargo protein SNC1 sorting in clathrin-coated vesicles. The protein is Probable lipase MIL1 of Saccharomyces cerevisiae (strain ATCC 204508 / S288c) (Baker's yeast).